We begin with the raw amino-acid sequence, 217 residues long: MRVILLGAPGAGKGTQAQLIMEHFGIPQISTGDMLRAAVKAGTPLGLQAKDIMASGGLVSDDLIIALVKERISSSDCSNGFLFDGFPRTIPQAEALLEADVHIDHVIEIHVPDEEIVARLSGRRVHEASGRVYHIIHNAPRVEGHDDVTGEPLVQRPDDHEATVRKRLAVYHEQTEPLVGFYQKLVAEGKVKAPKYTRINGIGSVDSIRQQLLDVLR.

10-15 (GAGKGT) lines the ATP pocket. Residues 30–59 (STGDMLRAAVKAGTPLGLQAKDIMASGGLV) are NMP. AMP-binding positions include threonine 31, arginine 36, 57-59 (GLV), 85-88 (GFPR), and glutamine 92. An LID region spans residues 122–159 (GRRVHEASGRVYHIIHNAPRVEGHDDVTGEPLVQRPDD). ATP-binding positions include arginine 123 and 132–133 (VY). Arginine 156 and arginine 167 together coordinate AMP. Position 203 (glycine 203) interacts with ATP.

The protein belongs to the adenylate kinase family. As to quaternary structure, monomer.

The protein localises to the cytoplasm. The catalysed reaction is AMP + ATP = 2 ADP. Its pathway is purine metabolism; AMP biosynthesis via salvage pathway; AMP from ADP: step 1/1. Its function is as follows. Catalyzes the reversible transfer of the terminal phosphate group between ATP and AMP. Plays an important role in cellular energy homeostasis and in adenine nucleotide metabolism. In Cellvibrio japonicus (strain Ueda107) (Pseudomonas fluorescens subsp. cellulosa), this protein is Adenylate kinase.